Here is a 132-residue protein sequence, read N- to C-terminus: MIRFILLQNRQGKTRLAKYYVPLEDSEKHKVEYEVHRLVVNRDPKFTNFVEFRTHKVIYRRYAGLFFSICVDITDNELAYLECIHLFVEILDHFFSNVCELDLVFNFHKVYRYLILDEFILAGELQETSKRQ.

It belongs to the adaptor complexes small subunit family. Adaptor protein complex 2 (AP-2) is a heterotetramer composed of two large adaptins (alpha-type and beta-type subunits), a medium adaptin (mu-type subunit AP50) and a small adaptin (sigma-type subunit AP17). In terms of tissue distribution, widely expressed in the embryo, endosperm, leaf and root.

It is found in the cell membrane. Its subcellular location is the membrane. The protein localises to the coated pit. Component of the adaptor complexes which link clathrin to receptors in coated vesicles. Clathrin-associated protein complexes are believed to interact with the cytoplasmic tails of membrane proteins, leading to their selection and concentration. AP2S1/AP17 is a subunit of the plasma membrane adaptor. The complex binds polyphosphoinositides. In Zea mays (Maize), this protein is AP-2 complex subunit sigma (AP-17).